Reading from the N-terminus, the 79-residue chain is Acyl carrier protein (79 aa).

The Carrier domain occupies 2–77 (SDIEARVKKI…NAVDYATKNQ (76 aa)). Serine 37 bears the O-(pantetheine 4'-phosphoryl)serine mark.

The protein belongs to the acyl carrier protein (ACP) family. Post-translationally, 4'-phosphopantetheine is transferred from CoA to a specific serine of apo-ACP by AcpS. This modification is essential for activity because fatty acids are bound in thioester linkage to the sulfhydryl of the prosthetic group.

The protein resides in the cytoplasm. Its pathway is lipid metabolism; fatty acid biosynthesis. In terms of biological role, carrier of the growing fatty acid chain in fatty acid biosynthesis. The sequence is that of Acyl carrier protein from Variovorax paradoxus (strain S110).